The sequence spans 307 residues: MPSEHPFSDGISTPNPKETMNDTAQITAGYGRRYIVRTPDGTTYEASTRKKRVDFACGDRVRISPVNAEQVVIEDFLPRQSLLYRQDAWKTKLIAANVTQLLIVTAAVPSPSVRLLQRALLAAEAAGIRAVIVLNKADLPETALWLEKLKFYETLGYPVIETRVLENADSLRPVLQGHSNILLGQSGMGKSTLTNALLGSQTARTGDISAALDSGKHTTTHARLYDLNGETQLIDSPGLQEFGLHHLQAADLPHYFPDFRHLVGQCRFHNCTHRAEPGCAFKAAAETGAASPERLAFLQGITDELLG.

A disordered region spans residues 1-21 (MPSEHPFSDGISTPNPKETMN). Polar residues predominate over residues 10-21 (GISTPNPKETMN). The CP-type G domain maps to 85–242 (RQDAWKTKLI…LIDSPGLQEF (158 aa)). Residues 135 to 138 (NKAD) and 184 to 192 (GQSGMGKST) each bind GTP. Positions 266, 271, 273, and 279 each coordinate Zn(2+).

It belongs to the TRAFAC class YlqF/YawG GTPase family. RsgA subfamily. Monomer. Associates with 30S ribosomal subunit, binds 16S rRNA. It depends on Zn(2+) as a cofactor.

It is found in the cytoplasm. Its function is as follows. One of several proteins that assist in the late maturation steps of the functional core of the 30S ribosomal subunit. Helps release RbfA from mature subunits. May play a role in the assembly of ribosomal proteins into the subunit. Circularly permuted GTPase that catalyzes slow GTP hydrolysis, GTPase activity is stimulated by the 30S ribosomal subunit. The polypeptide is Small ribosomal subunit biogenesis GTPase RsgA (Neisseria gonorrhoeae (strain NCCP11945)).